We begin with the raw amino-acid sequence, 997 residues long: Mannuronan C5-epimerase AlgE2 (997 aa).

PbH1 repeat units follow at residues 133–155 (DRDVTLERVEIREMSGYGFDPHE), 157–179 (TINLTIRDSVAHDNGLDGFVADF), 180–202 (QIGGVFENNVSYNNDRHGFNIVT), 204–226 (TNDFVLSNNVAYGNGGAGLVVQR), 257–279 (AHDVTLQNAEIYGNGLYGVRVYG), 280–315 (AEDVQILDNYIHDNSQNGSYAEILLQSYDDTAGVSG), and 320–359 (TTGTWIEGNTIVGSANSTYGIQERDDGTDYSSLYANSVSN). Hemolysin-type calcium-binding repeat units lie at residues 388–403 (GTAGNDTLGGSDAHET), 406–422 (GLDGNDRLNGGAGNDIL), 424–439 (GGAGRDNLTGGAGADL), 557–573 (GHAGNDTLDGGAGDDIL), 574–591 (VGGAGRDSLTGGAGADVF), 696–711 (GSAGNDSLQGTAADEV), 713–730 (HGGGGRDTLAGGAGADVF), 828–839 (GGDGNDTLSGSS), 846–862 (GGVGNDSLDGGAGNDIL), and 864–880 (GGAGRDTLSGGSGSDIF).

The protein belongs to the D-mannuronate C5-epimerase family. Ca(2+) is required as a cofactor.

It localises to the secreted. The catalysed reaction is [(1-&gt;4)-beta-D-mannuronosyl](n) = [alginate](n). The protein operates within glycan biosynthesis; alginate biosynthesis. With respect to regulation, inhibited by zinc. In terms of biological role, converts beta-D-mannuronic acid (M) to alpha-L-guluronic acid (G), producing a polymer with gel-forming capacity, required for the formation of the cyst coat. This is Mannuronan C5-epimerase AlgE2 from Azotobacter vinelandii.